Here is a 248-residue protein sequence, read N- to C-terminus: Ribonuclease PH (248 aa).

Residues Arg86 and 124 to 126 (GTR) contribute to the phosphate site.

This sequence belongs to the RNase PH family. Homohexameric ring arranged as a trimer of dimers.

The catalysed reaction is tRNA(n+1) + phosphate = tRNA(n) + a ribonucleoside 5'-diphosphate. In terms of biological role, phosphorolytic 3'-5' exoribonuclease that plays an important role in tRNA 3'-end maturation. Removes nucleotide residues following the 3'-CCA terminus of tRNAs; can also add nucleotides to the ends of RNA molecules by using nucleoside diphosphates as substrates, but this may not be physiologically important. Probably plays a role in initiation of 16S rRNA degradation (leading to ribosome degradation) during starvation. This is Ribonuclease PH from Clostridium perfringens (strain SM101 / Type A).